The chain runs to 238 residues: Endothelin-3 (238 aa).

The signal sequence occupies residues 1–16 (MEPGLWLLFGLTVTSA). Positions 17–94 (AGFVPCSQSG…AEGAPEHHRS (78 aa)) are excised as a propeptide. The tract at residues 24–89 (QSGDAGRRGV…GQEQAAEGAP (66 aa)) is disordered. 2 cysteine pairs are disulfide-bonded: Cys-97–Cys-111 and Cys-99–Cys-107. Positions 118–238 (INTPEQTVPY…PRCLFQEGAP (121 aa)) are excised as a propeptide. The tract at residues 159–173 (CACVGRYDKACLHFC) is endothelin-like. Residues 183–219 (SRTAEKTDKEEEGKVEVKDQQSKQALDLHHPKLMPGS) form a disordered region. Basic and acidic residues predominate over residues 185–212 (TAEKTDKEEEGKVEVKDQQSKQALDLHH).

The protein belongs to the endothelin/sarafotoxin family. In terms of tissue distribution, expressed in trophoblasts and placental stem villi vessels, but not in cultured placental smooth muscle cells.

The protein resides in the secreted. In terms of biological role, endothelins are endothelium-derived vasoconstrictor peptides. The sequence is that of Endothelin-3 (EDN3) from Homo sapiens (Human).